The primary structure comprises 134 residues: Arginine decarboxylase proenzyme (134 aa).

The active-site Schiff-base intermediate with substrate; via pyruvic acid is S82. S82 is subject to Pyruvic acid (Ser); by autocatalysis. The Proton acceptor; for processing activity role is filled by H87. C102 serves as the catalytic Proton donor; for catalytic activity.

Belongs to the prokaryotic AdoMetDC family. Type 1 subfamily. As to quaternary structure, heterooctamer of four alpha and four beta chains arranged as a tetramer of alpha/beta heterodimers. It depends on pyruvate as a cofactor. In terms of processing, is synthesized initially as an inactive proenzyme. Formation of the active enzyme involves a self-maturation process in which the active site pyruvoyl group is generated from an internal serine residue via an autocatalytic post-translational modification. Two non-identical subunits are generated from the proenzyme in this reaction, and the pyruvate is formed at the N-terminus of the alpha chain, which is derived from the carboxyl end of the proenzyme. The post-translation cleavage follows an unusual pathway, termed non-hydrolytic serinolysis, in which the side chain hydroxyl group of the serine supplies its oxygen atom to form the C-terminus of the beta chain, while the remainder of the serine residue undergoes an oxidative deamination to produce ammonia and the pyruvoyl group blocking the N-terminus of the alpha chain.

It carries out the reaction L-arginine + H(+) = agmatine + CO2. The protein operates within amine and polyamine biosynthesis; agmatine biosynthesis; agmatine from L-arginine: step 1/1. Its function is as follows. Specifically catalyzes the decarboxylation of L-arginine to agmatine. Has no S-adenosylmethionine decarboxylase (AdoMetDC) activity. In Saccharolobus islandicus (strain M.16.4 / Kamchatka #3) (Sulfolobus islandicus), this protein is Arginine decarboxylase proenzyme.